Reading from the N-terminus, the 46-residue chain is Major urinary protein (46 aa).

N-linked (GlcNAc...) asparagine glycosylation is present at Asn-15.

It belongs to the calycin superfamily. Lipocalin family. As to expression, found in many tissues including liver, urine, preputial gland, clitoral gland, submandibular gland and salivary gland.

The protein resides in the secreted. Its function is as follows. Binds pheromones that are released from drying urine of males. These pheromones affect the sexual behavior of females. Acts as a shuttle for pheromonal communication between individuals of the same species. This is Major urinary protein from Rattus rattus (Black rat).